The primary structure comprises 202 residues: ATP-dependent Clp protease proteolytic subunit (202 aa).

Serine 98 acts as the Nucleophile in catalysis. The active site involves histidine 123.

Belongs to the peptidase S14 family. Fourteen ClpP subunits assemble into 2 heptameric rings which stack back to back to give a disk-like structure with a central cavity, resembling the structure of eukaryotic proteasomes.

It localises to the cytoplasm. It catalyses the reaction Hydrolysis of proteins to small peptides in the presence of ATP and magnesium. alpha-casein is the usual test substrate. In the absence of ATP, only oligopeptides shorter than five residues are hydrolyzed (such as succinyl-Leu-Tyr-|-NHMec, and Leu-Tyr-Leu-|-Tyr-Trp, in which cleavage of the -Tyr-|-Leu- and -Tyr-|-Trp bonds also occurs).. Its function is as follows. Cleaves peptides in various proteins in a process that requires ATP hydrolysis. Has a chymotrypsin-like activity. Plays a major role in the degradation of misfolded proteins. The chain is ATP-dependent Clp protease proteolytic subunit from Magnetococcus marinus (strain ATCC BAA-1437 / JCM 17883 / MC-1).